A 276-amino-acid polypeptide reads, in one-letter code: GPN-loop GTPase 3 (276 aa).

13–18 (SSGKST) provides a ligand contact to GTP. The Gly-Pro-Asn (GPN)-loop; involved in dimer interface motif lies at 70 to 72 (GPN). Residue 173-176 (SKMD) coordinates GTP. Positions 257–276 (EDQEPKDPDRFEADDLEDDE) are disordered. Positions 259–269 (QEPKDPDRFEA) are enriched in basic and acidic residues.

The protein belongs to the GPN-loop GTPase family. Heterodimers with gpn1 or gpn2. Binds to RNA polymerase II (RNAPII).

The protein resides in the cytoplasm. It is found in the nucleus. Its function is as follows. Small GTPase required for proper nuclear import of RNA polymerase II and III (RNAPII and RNAPIII). May act at an RNAP assembly step prior to nuclear import. The sequence is that of GPN-loop GTPase 3 from Schizosaccharomyces pombe (strain 972 / ATCC 24843) (Fission yeast).